Here is a 1147-residue protein sequence, read N- to C-terminus: Nitric oxide synthase, inducible (1147 aa).

Residues 22–51 (KDINNNVEKTPGAIPSPTTQDDPKSHKHQN) are disordered. A DINNN-motif; mediates interaction with SPSB1, SPSB2 and SPSB4 motif is present at residues 23–27 (DINNN). Residues cysteine 107 and cysteine 112 each contribute to the Zn(2+) site. Serine 115 provides a ligand contact to (6R)-L-erythro-5,6,7,8-tetrahydrobiopterin. Residue cysteine 197 participates in heme b binding. Positions 260, 369, 370, and 374 each coordinate L-arginine. 4 residues coordinate (6R)-L-erythro-5,6,7,8-tetrahydrobiopterin: arginine 378, isoleucine 459, tryptophan 460, and phenylalanine 473. Tyrosine 488 contacts heme b. The segment at 512–532 (FTVLVKAVFFASVLMRKVMAS) is calmodulin-binding. A Flavodoxin-like domain is found at 536–674 (ATVLFATETG…AFRSWAVQTF (139 aa)). Threonine 542, glutamate 543, threonine 544, lysine 546, and serine 547 together coordinate FMN. Threonine 564 carries the phosphothreonine modification. Phosphotyrosine is present on tyrosine 572. The FMN site is built by serine 588, threonine 589, serine 625, cysteine 632, glutamate 658, and glutamine 662. The 241-residue stretch at 727–967 (KNVFTMRLKS…VRSVSGFQLP (241 aa)) folds into the FAD-binding FR-type domain. Arginine 747 provides a ligand contact to NADP(+). Positions 769, 903, 905, 906, 921, and 923 each coordinate FAD. Threonine 926 is an NADP(+) binding site. Positions 927, 940, 941, and 942 each coordinate FAD. NADP(+) is bound by residues threonine 981, arginine 1014, serine 1043, arginine 1044, lysine 1050, tyrosine 1052, glutamine 1054, and aspartate 1087.

Belongs to the NOS family. In terms of assembly, homodimer. Interacts with NHERF1. Interacts with GAPDH; induced by oxidatively-modified low-densitity lipoprotein (LDL(ox)). Interacts with S100A8 and S100A9 to form the iNOS-S100A8/9 transnitrosylase complex. Interacts with SPSB1, SPSB2 and SPSB4. Interacts with ELOC and CUL5 in the presence of SPSB1 or SPSB2 or SPSB4. Forms a complex with ASL, ASS1 and HSP90AA1; the complex regulates cell-autonomous L-arginine synthesis and citrulline recycling while channeling extracellular L-arginine to nitric oxide synthesis pathway. It depends on heme b as a cofactor. FAD is required as a cofactor. Requires FMN as cofactor. The cofactor is (6R)-L-erythro-5,6,7,8-tetrahydrobiopterin. In terms of processing, polyubiquitinated; mediated by SPSB1, SPSB2 and SPSB4, leading to proteasomal degradation. In normal kidney, expressed primarily in the medullary thick ascending limb, with minor amounts in the medullary collecting duct and vasa recta bundle.

The protein resides in the cytoplasm. Its subcellular location is the cytosol. It catalyses the reaction 2 L-arginine + 3 NADPH + 4 O2 + H(+) = 2 L-citrulline + 2 nitric oxide + 3 NADP(+) + 4 H2O. With respect to regulation, not stimulated by calcium/calmodulin. Aspirin inhibits expression and function of this enzyme and effects may be exerted at the level of translational/post-translational modification and directly on the catalytic activity. Functionally, produces nitric oxide (NO) which is a messenger molecule with diverse functions throughout the body. In macrophages, NO mediates tumoricidal and bactericidal actions. Also has nitrosylase activity and mediates cysteine S-nitrosylation of cytoplasmic target proteins such PTGS2/COX2. As component of the iNOS-S100A8/9 transnitrosylase complex involved in the selective inflammatory stimulus-dependent S-nitrosylation of GAPDH implicated in regulation of the GAIT complex activity and probably multiple targets including ANXA5, EZR, MSN and VIM. Involved in inflammation, enhances the synthesis of pro-inflammatory mediators such as IL6 and IL8. In Rattus norvegicus (Rat), this protein is Nitric oxide synthase, inducible (Nos2).